Consider the following 101-residue polypeptide: NAD(P)H-quinone oxidoreductase subunit 4L, chloroplastic (101 aa).

Transmembrane regions (helical) follow at residues 2–22 (MLEHVLVLGAYLFSIGIYGLI), 32–52 (MCLELILNAVNINLVTFSDFF), and 61–81 (ILSIFVIAIAAAEAAIGLAIV).

The protein belongs to the complex I subunit 4L family. As to quaternary structure, NDH is composed of at least 16 different subunits, 5 of which are encoded in the nucleus.

Its subcellular location is the plastid. The protein resides in the chloroplast thylakoid membrane. It carries out the reaction a plastoquinone + NADH + (n+1) H(+)(in) = a plastoquinol + NAD(+) + n H(+)(out). It catalyses the reaction a plastoquinone + NADPH + (n+1) H(+)(in) = a plastoquinol + NADP(+) + n H(+)(out). NDH shuttles electrons from NAD(P)H:plastoquinone, via FMN and iron-sulfur (Fe-S) centers, to quinones in the photosynthetic chain and possibly in a chloroplast respiratory chain. The immediate electron acceptor for the enzyme in this species is believed to be plastoquinone. Couples the redox reaction to proton translocation, and thus conserves the redox energy in a proton gradient. The polypeptide is NAD(P)H-quinone oxidoreductase subunit 4L, chloroplastic (Buxus microphylla (Littleleaf boxwood)).